We begin with the raw amino-acid sequence, 119 residues long: Ribonuclease P protein component (119 aa).

It belongs to the RnpA family. In terms of assembly, consists of a catalytic RNA component (M1 or rnpB) and a protein subunit.

It carries out the reaction Endonucleolytic cleavage of RNA, removing 5'-extranucleotides from tRNA precursor.. Functionally, RNaseP catalyzes the removal of the 5'-leader sequence from pre-tRNA to produce the mature 5'-terminus. It can also cleave other RNA substrates such as 4.5S RNA. The protein component plays an auxiliary but essential role in vivo by binding to the 5'-leader sequence and broadening the substrate specificity of the ribozyme. The chain is Ribonuclease P protein component from Escherichia coli O6:H1 (strain CFT073 / ATCC 700928 / UPEC).